Reading from the N-terminus, the 265-residue chain is HUWE1-associated protein modifying stress responses (265 aa).

Disordered stretches follow at residues 1–22 (MEDK…HWFS), 145–170 (RNSR…GSSV), 195–218 (VRSS…RRNG), and 240–265 (GTRK…NRMI). 2 stretches are compositionally biased toward polar residues: residues 156–170 (VSPN…GSSV) and 195–212 (VRSS…SSNT).

The protein belongs to the HAPSTR1 family. In terms of assembly, oligomer.

Its subcellular location is the nucleus. The protein resides in the cytoplasm. Functionally, acts as a central player within a network of stress response pathways promoting cellular adaptability. Functions as a negative regulator of TP53/P53 in the cellular response to telomere erosion and probably also DNA damage. The sequence is that of HUWE1-associated protein modifying stress responses from Xenopus tropicalis (Western clawed frog).